The following is a 199-amino-acid chain: Probable adenylyl-sulfate kinase (199 aa).

G34 to S41 is an ATP binding site. Residue S108 is the Phosphoserine intermediate of the active site.

The protein belongs to the APS kinase family.

The enzyme catalyses adenosine 5'-phosphosulfate + ATP = 3'-phosphoadenylyl sulfate + ADP + H(+). Its pathway is sulfur metabolism; hydrogen sulfide biosynthesis; sulfite from sulfate: step 2/3. Functionally, catalyzes the synthesis of activated sulfate. The sequence is that of Probable adenylyl-sulfate kinase (yisZ) from Bacillus subtilis (strain 168).